We begin with the raw amino-acid sequence, 286 residues long: Phosphatidylglycerol--prolipoprotein diacylglyceryl transferase (286 aa).

The next 4 membrane-spanning stretches (helical) occupy residues W25–L45, F65–Y85, G103–W123, and V127–G147. R148 contacts a 1,2-diacyl-sn-glycero-3-phospho-(1'-sn-glycerol). 3 helical membrane passes run A188–L208, G212–F232, and M248–W268.

It belongs to the Lgt family.

The protein resides in the cell inner membrane. It carries out the reaction L-cysteinyl-[prolipoprotein] + a 1,2-diacyl-sn-glycero-3-phospho-(1'-sn-glycerol) = an S-1,2-diacyl-sn-glyceryl-L-cysteinyl-[prolipoprotein] + sn-glycerol 1-phosphate + H(+). It participates in protein modification; lipoprotein biosynthesis (diacylglyceryl transfer). Functionally, catalyzes the transfer of the diacylglyceryl group from phosphatidylglycerol to the sulfhydryl group of the N-terminal cysteine of a prolipoprotein, the first step in the formation of mature lipoproteins. The polypeptide is Phosphatidylglycerol--prolipoprotein diacylglyceryl transferase (Rhodopseudomonas palustris (strain ATCC BAA-98 / CGA009)).